A 245-amino-acid polypeptide reads, in one-letter code: 7-cyano-7-deazaguanine synthase 2 (245 aa).

12–22 contacts ATP; sequence FSGGQDSTTCL. Positions 200, 215, 218, and 221 each coordinate Zn(2+).

The protein belongs to the QueC family. Requires Zn(2+) as cofactor.

It carries out the reaction 7-carboxy-7-deazaguanine + NH4(+) + ATP = 7-cyano-7-deazaguanine + ADP + phosphate + H2O + H(+). Its pathway is purine metabolism; 7-cyano-7-deazaguanine biosynthesis. In terms of biological role, catalyzes the ATP-dependent conversion of 7-carboxy-7-deazaguanine (CDG) to 7-cyano-7-deazaguanine (preQ(0)). The protein is 7-cyano-7-deazaguanine synthase 2 of Mesorhizobium japonicum (strain LMG 29417 / CECT 9101 / MAFF 303099) (Mesorhizobium loti (strain MAFF 303099)).